The primary structure comprises 167 residues: Inclusion membrane protein G (167 aa).

The next 2 membrane-spanning stretches (helical) occupy residues 33–57 (VVLA…AVLF) and 63–88 (VLPY…LRSL). Residues 94–167 (SCKKRSPEEI…DNSRSRSRSF (74 aa)) form a sufficient for interaction with human 14-3-3 beta protein region. The tract at residues 97 to 167 (KRSPEEIEGA…DNSRSRSRSF (71 aa)) is disordered. Low complexity predominate over residues 122 to 135 (ESASPQASPTSSTL). The Phosphorylation-dependent binding motif motif lies at 161 to 166 (RSRSRS). Residue Ser166 is modified to Phosphoserine.

As to quaternary structure, in infected HeLa cells colocalizes with host 14-3-3 protein (YWHAB); phosphorylation of Ser-166 is probably required. Interacts with Pkn1. Post-translationally, phosphorylated, possibly at more than one position, in infected HeLa cells. Phosphorylated by chlamydial kinase Pnk1.

It localises to the secreted. The protein localises to the host vacuole. The protein resides in the host pathogen-containing vacuole. It is found in the host pathogen-containing vacuole membrane. Its function is as follows. Inclusion membrane protein probably involved in early modification events of the chlamydial inclusion. The chain is Inclusion membrane protein G from Chlamydia trachomatis serovar L2 (strain ATCC VR-902B / DSM 19102 / 434/Bu).